The primary structure comprises 414 residues: 4-hydroxy-3-methylbut-2-en-1-yl diphosphate synthase (flavodoxin) (414 aa).

C304, C307, C350, and E357 together coordinate [4Fe-4S] cluster.

This sequence belongs to the IspG family. [4Fe-4S] cluster serves as cofactor.

It catalyses the reaction (2E)-4-hydroxy-3-methylbut-2-enyl diphosphate + oxidized [flavodoxin] + H2O + 2 H(+) = 2-C-methyl-D-erythritol 2,4-cyclic diphosphate + reduced [flavodoxin]. Its pathway is isoprenoid biosynthesis; isopentenyl diphosphate biosynthesis via DXP pathway; isopentenyl diphosphate from 1-deoxy-D-xylulose 5-phosphate: step 5/6. Functionally, converts 2C-methyl-D-erythritol 2,4-cyclodiphosphate (ME-2,4cPP) into 1-hydroxy-2-methyl-2-(E)-butenyl 4-diphosphate. This is 4-hydroxy-3-methylbut-2-en-1-yl diphosphate synthase (flavodoxin) from Aromatoleum aromaticum (strain DSM 19018 / LMG 30748 / EbN1) (Azoarcus sp. (strain EbN1)).